A 201-amino-acid chain; its full sequence is Regulator of G-protein signaling 16 (201 aa).

Residues Cys2 and Cys12 are each lipidated (S-palmitoyl cysteine). The 117-residue stretch at 64–180 (SFDLLLNSKN…LKSPAYRDLA (117 aa)) folds into the RGS domain. Tyr167 carries the post-translational modification Phosphotyrosine; by EGFR. Tyr176 is subject to Phosphotyrosine. The interval 181 to 201 (AQASATSTSAPSGSPAEPSHT) is disordered.

Interacts with GNAI1 and GNAQ. Interacts with GNAI3, GNAI3 and GNAO1. In terms of processing, palmitoylated on Cys-2 and/or Cys-12. Phosphorylated. Phosphorylation at Tyr-167 by EGFR enhances GTPase accelerating (GAP) activity toward GNAI1. As to expression, retinal; also predominantly expressed in the liver and pituitary.

Its subcellular location is the membrane. Regulates G protein-coupled receptor signaling cascades. Inhibits signal transduction by increasing the GTPase activity of G protein alpha subunits, thereby driving them into their inactive GDP-bound form. Plays an important role in the phototransduction cascade by regulating the lifetime and effective concentration of activated transducin alpha. May regulate extra and intracellular mitogenic signals. The polypeptide is Regulator of G-protein signaling 16 (Rgs16) (Mus musculus (Mouse)).